A 78-amino-acid polypeptide reads, in one-letter code: Large ribosomal subunit protein bL28 (78 aa).

The disordered stretch occupies residues 1–29 (MSAHCQVTGRQPSFGKSVSHSHRRTSRRW).

Belongs to the bacterial ribosomal protein bL28 family.

This chain is Large ribosomal subunit protein bL28, found in Corynebacterium efficiens (strain DSM 44549 / YS-314 / AJ 12310 / JCM 11189 / NBRC 100395).